A 1707-amino-acid chain; its full sequence is Latrophilin Cirl (1707 aa).

Over 1-767 the chain is Extracellular; sequence MLPTILSISY…LFTMFDGNMR (767 aa). The region spanning 25 to 114 is the SUEL-type lectin domain; that stretch reads ACEGKKLTIE…KYLEAHYQCI (90 aa). Asn-142 is a glycosylation site (N-linked (GlcNAc...) asparagine). Residues 176–301 are disordered; the sequence is GLFNVPPQHT…TAASGAVVPG (126 aa). Composition is skewed to polar residues over residues 185-198 and 256-265; these read TAVT…STTA and NATSPSNTRI. The N-linked (GlcNAc...) asparagine glycan is linked to Asn-256. Over residues 275–285 the composition is skewed to low complexity; sequence DDGTLLTTKSS. Residues Asn-302, Asn-341, Asn-398, Asn-655, Asn-703, and Asn-730 are each glycosylated (N-linked (GlcNAc...) asparagine). The segment at 376-400 is disordered; sequence YDEYDDDPSSTTPAPNGGDCLHNSS. One can recognise a GAIN-B domain in the interval 561 to 754; sequence RSVVQKVKNI…AILMDVVDEH (194 aa). 2 disulfides stabilise this stretch: Cys-709/Cys-736 and Cys-724/Cys-738. The segment at 709–754 is GPS; that stretch reads CVFWNYIDHAWSANGCSLESTNRTHSVCSCNHLTNFAILMDVVDEH. The helical transmembrane segment at 768-788 threads the bilayer; that stretch reads IFIYISIGICVVFIVIALLTL. At 789–801 the chain is on the cytoplasmic side; the sequence is KLFNGVFVKSART. A helical transmembrane segment spans residues 802 to 822; it reads SIYTSIYLCLLAIELLFLLGI. Residues 823-828 lie on the Extracellular side of the membrane; that stretch reads EQTETS. A helical transmembrane segment spans residues 829 to 849; sequence IFCGFITIFLHCAILSGTAWF. At 850-875 the chain is on the cytoplasmic side; the sequence is CYEAFHSYSTLTSDELLLEVDQTPKV. The helical transmembrane segment at 876 to 896 threads the bilayer; the sequence is NCYYLLSYGLSLSVVAISLVI. Topologically, residues 897–920 are extracellular; the sequence is DPSTYTQNDYCVLMEANALFYATF. Residues 921–941 traverse the membrane as a helical segment; that stretch reads VIPVLVFFVAAIGYTFLSWII. The Cytoplasmic portion of the chain corresponds to 942 to 968; sequence LCRKSRTGLKTKEHTRLASVRFDIRCS. A helical transmembrane segment spans residues 969-989; that stretch reads FVFLLLLSAVWCSSYFYLRGA. Residues 990–999 are Extracellular-facing; sequence KMDDDTADVY. Residues 1000 to 1020 form a helical membrane-spanning segment; that stretch reads GYCFICFNTLLGLYIFVFHCI. Over 1021 to 1707 the chain is Cytoplasmic; sequence QNEKIRREYR…VRCYLEPLAK (687 aa). The residue at position 1156 (Ser-1156) is a Phosphoserine. 2 disordered regions span residues 1169–1188 and 1236–1260; these read AHKQ…GEGY and KPNS…SGSL. Positions 1172–1181 are enriched in low complexity; it reads QQQQQQQQQQ. Phosphoserine occurs at positions 1255 and 1262. Over residues 1316–1326 the composition is skewed to low complexity; the sequence is QQLHQQQQQQL. 4 disordered regions span residues 1316-1335, 1450-1538, 1563-1582, and 1612-1687; these read QQLH…QVEQ, GGGS…SDER, APLD…EHNG, and GGRL…QQRH. 2 positions are modified to phosphoserine: Ser-1327 and Ser-1328. Positions 1456–1481 are enriched in low complexity; sequence GGSVSSRSQQQQLKKQQQQQSLAQQR. Acidic residues-rich tracts occupy residues 1489–1503 and 1513–1526; these read DDDD…EEAT and CDED…DLED. Residues 1635–1650 show a composition bias toward polar residues; that stretch reads QTPAQKRQQLQKLSPQ. Residues 1651–1673 show a composition bias toward low complexity; sequence STTSSSSHTSHSNPNPHPLQLTH. Positions 1674–1686 are enriched in basic residues; sequence PHPHQHPPHHQQR.

This sequence belongs to the G-protein coupled receptor 2 family. LN-TM7 subfamily. Forms a heterodimer, consisting of a large extracellular region non-covalently linked to a seven-transmembrane moiety. In terms of processing, proteolytically cleaved into 2 subunits, an extracellular subunit and a seven-transmembrane subunit.

Its subcellular location is the cell membrane. The sequence is that of Latrophilin Cirl from Drosophila yakuba (Fruit fly).